The sequence spans 534 residues: MKYNTSTLGRRAAAAAGVLTLAVLGLAPMAQAENANHGDINTEALGSLTIHKHLNGDGNPIGAPDGTASNDDGKGAPVSGVQFTAYEINGIDLKTSEGWAKVNALTNTGAIPDNACANPGQPTLPNYTFRSSRVSGDTDRDGEAKIESLPVKAYLVCETKTPGNIVQKAKPFVVTIPHPNTAAKADGTWLYDVHVYPKNEKIEVAKTIEDQRNNGYIVGSKVRFPVSSTLPKLDDNSYYKYYQFKDTLDNRLKQVTATDVTLGGTRLDEGTDYTLGTDGQTVTVTFNQNGLSKLKGNPGQKLQAVFEGVVSEVGDGSINNTAQLISDTTYAEQPPAPETPPANPDNPPTTEQVTSKWGDLTIKKVDGNDRSGDKDGLKGAEFQIYKAKDAYADTCSPEADGQPLTINGESTFTTGEGGTINFKALFVSDSVQDTGRDNRVDAPHRCYVLVETKAPAGYVLPADASRAITVEPGAGVTQQVVIDNVKQSVPGLPLTGANGMLILTASGAALLMIAVGSVLVARYRERKRNRDLAA.

An N-terminal signal peptide occupies residues 1–32 (MKYNTSTLGRRAAAAAGVLTLAVLGLAPMAQA). Disordered regions lie at residues 56–76 (GDGN…GKGA) and 329–376 (TYAE…DKDG). Residues 334 to 347 (PPAPETPPANPDNP) are compositionally biased toward pro residues. Residues 361–376 (TIKKVDGNDRSGDKDG) are compositionally biased toward basic and acidic residues. The LPXTG sorting signal motif lies at 492-496 (LPLTG). The residue at position 495 (T495) is a Pentaglycyl murein peptidoglycan amidated threonine. Positions 496-534 (GANGMLILTASGAALLMIAVGSVLVARYRERKRNRDLAA) are cleaved as a propeptide — removed by sortase.

The protein localises to the secreted. The protein resides in the cell wall. It is found in the fimbrium. Its function is as follows. Major fimbrial subunit of A.naeslundii. The chain is Fimbrial subunit type 2 from Actinomyces naeslundii.